Here is an 81-residue protein sequence, read N- to C-terminus: MAKKIGIEQSLSDVEAALKEKGYDVVMMKSPADAQGCDCCVVTGLDNNVQGIADTVTQAPVITASGMTAEEICSEVESRIQ.

It belongs to the UPF0180 family.

In Bacillus subtilis (strain 168), this protein is UPF0180 protein YkuS (ykuS).